We begin with the raw amino-acid sequence, 282 residues long: Bacterial lipoprotein FTN_1103 (282 aa).

The signal sequence occupies residues 1 to 28 (MKYGNLMMTKKKLLIGMVTISGIVILGS). A lipid anchor (N-palmitoyl cysteine) is attached at Cys29. Cys29 carries S-diacylglycerol cysteine lipidation.

The protein localises to the cell membrane. Stimulates the host immune inflammatory signaling system allowing the host to combat the bacteria. Stimulates mouse interleukin-6 (Il6) production. This is Bacterial lipoprotein FTN_1103 from Francisella tularensis subsp. novicida (strain U112).